A 139-amino-acid polypeptide reads, in one-letter code: Nucleoside diphosphate kinase (139 aa).

6 residues coordinate ATP: K10, F58, R86, T92, R103, and N113. H116 functions as the Pros-phosphohistidine intermediate in the catalytic mechanism.

This sequence belongs to the NDK family. Homotetramer. The cofactor is Mg(2+).

The protein resides in the cytoplasm. The catalysed reaction is a 2'-deoxyribonucleoside 5'-diphosphate + ATP = a 2'-deoxyribonucleoside 5'-triphosphate + ADP. It catalyses the reaction a ribonucleoside 5'-diphosphate + ATP = a ribonucleoside 5'-triphosphate + ADP. Its function is as follows. Major role in the synthesis of nucleoside triphosphates other than ATP. The ATP gamma phosphate is transferred to the NDP beta phosphate via a ping-pong mechanism, using a phosphorylated active-site intermediate. The polypeptide is Nucleoside diphosphate kinase (Phenylobacterium zucineum (strain HLK1)).